The chain runs to 505 residues: uncharacterized protein (505 aa).

The span at 1-16 shows a compositional bias: polar residues; it reads MPPTASLTRSPPTASQ. A disordered region spans residues 1–474; the sequence is MPPTASLTRS…TPPTASLTRT (474 aa). Low complexity-rich tracts occupy residues 17–33 and 40–59; these read TRTL…PRAS and TASL…PPRA. Residues 66–78 are compositionally biased toward polar residues; sequence SRASLTRTLSRAS. Composition is skewed to low complexity over residues 96–122, 129–140, and 147–158; these read SLTR…PPRT, PRTSQTRTPPRA, and SRASRTRTPPRA. Composition is skewed to polar residues over residues 165 to 177 and 188 to 200; these read SRAS…SRAS and TRTP…TRTP. Residues 201 to 226 show a composition bias toward low complexity; that stretch reads PTASLTRASRTRTPPRTSQTRTPPRA. Composition is skewed to polar residues over residues 233-254, 265-293, 309-329, 345-365, 373-383, 399-408, and 435-448; these read SRAS…SRAS, TRTP…SLTR, LTRT…SLTR, TRTPSRASLTR, LTRSPPTASL, and LTRS…TRTP. Residues 453 to 474 show a composition bias toward low complexity; sequence LRRTPPRTSLTRTPPTASLTRT.

This is an uncharacterized protein from Homo sapiens (Human).